Here is a 314-residue protein sequence, read N- to C-terminus: Ornithine carbamoyltransferase (314 aa).

Residues 61 to 64, Gln88, Arg112, and 139 to 142 contribute to the carbamoyl phosphate site; these read STRT and HPCQ. Residues Asn170, Asp234, and 238 to 239 contribute to the L-ornithine site; that span reads SM. Carbamoyl phosphate is bound by residues 274 to 275 and Arg302; that span reads CL.

This sequence belongs to the aspartate/ornithine carbamoyltransferase superfamily. OTCase family.

The protein resides in the cytoplasm. It catalyses the reaction carbamoyl phosphate + L-ornithine = L-citrulline + phosphate + H(+). The protein operates within amino-acid biosynthesis; L-arginine biosynthesis; L-arginine from L-ornithine and carbamoyl phosphate: step 1/3. In terms of biological role, reversibly catalyzes the transfer of the carbamoyl group from carbamoyl phosphate (CP) to the N(epsilon) atom of ornithine (ORN) to produce L-citrulline. The protein is Ornithine carbamoyltransferase of Anoxybacillus flavithermus (strain DSM 21510 / WK1).